Reading from the N-terminus, the 367-residue chain is Glutamate 5-kinase (367 aa).

Residue Lys10 participates in ATP binding. Residues Ser50, Asp137, and Asn149 each contribute to the substrate site. Residues 169 to 170 (TD) and 211 to 217 (TGGMGTK) contribute to the ATP site. A PUA domain is found at 275–353 (AGEITVDEGA…QQIDAILGYE (79 aa)).

It belongs to the glutamate 5-kinase family.

The protein localises to the cytoplasm. The enzyme catalyses L-glutamate + ATP = L-glutamyl 5-phosphate + ADP. It functions in the pathway amino-acid biosynthesis; L-proline biosynthesis; L-glutamate 5-semialdehyde from L-glutamate: step 1/2. Catalyzes the transfer of a phosphate group to glutamate to form L-glutamate 5-phosphate. The protein is Glutamate 5-kinase of Citrobacter koseri (strain ATCC BAA-895 / CDC 4225-83 / SGSC4696).